The primary structure comprises 321 residues: 2,3,4,5-tetrahydropyridine-2,6-dicarboxylate N-succinyltransferase (321 aa).

Mg(2+) is bound by residues Asp166 and Glu183. Glu199 acts as the Acyl-anhydride intermediate in catalysis. Residues Arg201, Gly216, Ser219, Ala242, 257 to 258, Gly265, Lys281, and 294 to 297 each bind succinyl-CoA; these read EA and RRNS.

The protein belongs to the type 2 tetrahydrodipicolinate N-succinyltransferase family. In terms of assembly, homotrimer.

The protein resides in the cytoplasm. The catalysed reaction is (S)-2,3,4,5-tetrahydrodipicolinate + succinyl-CoA + H2O = (S)-2-succinylamino-6-oxoheptanedioate + CoA. The protein operates within amino-acid biosynthesis; L-lysine biosynthesis via DAP pathway; LL-2,6-diaminopimelate from (S)-tetrahydrodipicolinate (succinylase route): step 1/3. Catalyzes the conversion of the cyclic tetrahydrodipicolinate (THDP) into the acyclic N-succinyl-L-2-amino-6-oxopimelate using succinyl-CoA. This chain is 2,3,4,5-tetrahydropyridine-2,6-dicarboxylate N-succinyltransferase, found in Micrococcus luteus (strain ATCC 4698 / DSM 20030 / JCM 1464 / CCM 169 / CCUG 5858 / IAM 1056 / NBRC 3333 / NCIMB 9278 / NCTC 2665 / VKM Ac-2230) (Micrococcus lysodeikticus).